A 431-amino-acid polypeptide reads, in one-letter code: Serine hydroxymethyltransferase 2 (431 aa).

(6S)-5,6,7,8-tetrahydrofolate is bound by residues leucine 131 and 135 to 137; that span reads GHL. N6-(pyridoxal phosphate)lysine is present on lysine 240. Glutamate 256 provides a ligand contact to (6S)-5,6,7,8-tetrahydrofolate.

Belongs to the SHMT family. As to quaternary structure, homodimer. Requires pyridoxal 5'-phosphate as cofactor.

The protein localises to the cytoplasm. The enzyme catalyses (6R)-5,10-methylene-5,6,7,8-tetrahydrofolate + glycine + H2O = (6S)-5,6,7,8-tetrahydrofolate + L-serine. It functions in the pathway one-carbon metabolism; tetrahydrofolate interconversion. It participates in amino-acid biosynthesis; glycine biosynthesis; glycine from L-serine: step 1/1. Functionally, catalyzes the reversible interconversion of serine and glycine with tetrahydrofolate (THF) serving as the one-carbon carrier. This reaction serves as the major source of one-carbon groups required for the biosynthesis of purines, thymidylate, methionine, and other important biomolecules. Also exhibits THF-independent aldolase activity toward beta-hydroxyamino acids, producing glycine and aldehydes, via a retro-aldol mechanism. The sequence is that of Serine hydroxymethyltransferase 2 from Vibrio vulnificus (strain CMCP6).